An 874-amino-acid polypeptide reads, in one-letter code: Cap-specific mRNA (nucleoside-2'-O-)-methyltransferase 1A (874 aa).

Over residues 1–10 (MSERGDDDRT) the composition is skewed to basic and acidic residues. A disordered region spans residues 1–64 (MSERGDDDRT…APPTKQKTKA (64 aa)). The G-patch domain occupies 60–106 (QKTKAEEMMERMGYKAGEGLGKNKQGIQEPVALSTQRGKTGLGHEGA). Positions 211 to 440 (FFQNRAAMKT…ERYITCKGLR (230 aa)) constitute a RrmJ-type SAM-dependent 2'-O-MTase domain. Positions 273 and 354 each coordinate S-adenosyl-L-methionine. Catalysis depends on Lys-394, which acts as the Proton acceptor. Residues 535–555 (PNKQRPRGGDRGSRNGNQERL) form a disordered region.

The enzyme catalyses a 5'-end (N(7)-methyl 5'-triphosphoguanosine)-ribonucleoside in mRNA + S-adenosyl-L-methionine = a 5'-end (N(7)-methyl 5'-triphosphoguanosine)-(2'-O-methyl-ribonucleoside) in mRNA + S-adenosyl-L-homocysteine + H(+). Its function is as follows. S-adenosyl-L-methionine-dependent methyltransferase that mediates mRNA cap1 2'-O-ribose methylation to the 5'-cap structure of mRNAs. Methylates the ribose of the first nucleotide of a m(7)GpppG-capped mRNA to produce m(7)GpppNmp (cap1). Cap1 modification is linked to higher levels of translation. This is Cap-specific mRNA (nucleoside-2'-O-)-methyltransferase 1A from Caenorhabditis briggsae.